The chain runs to 214 residues: NADH-quinone oxidoreductase subunit C (214 aa).

Belongs to the complex I 30 kDa subunit family. As to quaternary structure, NDH-1 is composed of 14 different subunits. Subunits NuoB, C, D, E, F, and G constitute the peripheral sector of the complex.

The protein resides in the cell inner membrane. It carries out the reaction a quinone + NADH + 5 H(+)(in) = a quinol + NAD(+) + 4 H(+)(out). Functionally, NDH-1 shuttles electrons from NADH, via FMN and iron-sulfur (Fe-S) centers, to quinones in the respiratory chain. The immediate electron acceptor for the enzyme in this species is believed to be ubiquinone. Couples the redox reaction to proton translocation (for every two electrons transferred, four hydrogen ions are translocated across the cytoplasmic membrane), and thus conserves the redox energy in a proton gradient. The chain is NADH-quinone oxidoreductase subunit C from Francisella tularensis subsp. tularensis (strain WY96-3418).